We begin with the raw amino-acid sequence, 332 residues long: Polyprenyl transferase yanG (332 aa).

Helical transmembrane passes span 42 to 62, 72 to 92, 145 to 165, 170 to 190, 200 to 220, 242 to 262, 266 to 286, and 300 to 320; these read IWGA…LAFA, VTAT…FFVV, PAVT…PFMK, FPQV…WVGV, ALPL…FYAT, VKIL…MTAL, LSLI…PWHV, and VFKA…LELV.

This sequence belongs to the UbiA prenyltransferase family. The cofactor is Mg(2+).

Its subcellular location is the membrane. Its pathway is secondary metabolite biosynthesis; terpenoid biosynthesis. Functionally, polyprenyl transferase; part of the gene cluster that mediates the biosynthesis of yanuthone D, a fungal isoprenoid epoxycyclohexenone that acts as an antibiotic against fungi and bacteria. The first step of the pathway is the synthesis of 6-methylsalicylic acid (6-MSA) by the polyketide synthase yanA. 6-MSA is then converted to m-cresol by the decarboxylase yanB. The cytochrome P450 monooxygenase yanC then catalyzes the oxidation of m-cresol to toluquinol. Epoxidation of toluquinol is then performed by the short chain dehydrogenase yanD, with the help of yanE, and a further prenylation by yanG leads to 7-deacetoxyyanuthone A. The next step is the hydroxylation of C-22 of 7-deacetoxyyanuthone A by the cytochrome P450 monooxygenase yanH to yield 22-deacetylyanuthone A. O-Mevalon transferase yanI then attaches mevalon to the hydroxyl group of 22-deacetylyanuthone A to produce yanuthone E. Finally, the FAD-dependent monooxygenase yanF oxidizes the hydroxyl group at C15 of yanuthone E to form yanuthone D. Furthermore, several branching points in the pathway lead to the production of yanuthones F and G from 7-deacetoxyyanuthone A; yanuthones H and I from 22-deacetylyanuthone A; and yanuthone J from yanuthone E. YanG is also involved in the synthesis of yanuthone X1 which does not have 6-methylsalicylic acid (6-MSA) as precursor. This chain is Polyprenyl transferase yanG, found in Aspergillus niger (strain ATCC 1015 / CBS 113.46 / FGSC A1144 / LSHB Ac4 / NCTC 3858a / NRRL 328 / USDA 3528.7).